The sequence spans 116 residues: Endoribonuclease EndoA (116 aa).

The protein belongs to the PemK/MazF family. As to quaternary structure, homodimer. Forms a complex with antitoxin EndoAI in which the toxin activity is inhibited. One dimer binds a ssRNA substrate, forms a heterohexamer composed of alternating toxin and antitoxin homodimers which inhibits the endoribonuclease activity. Antitoxin prevents RNA binding to the endoribonuclease.

Toxic component of a type II toxin-antitoxin (TA) system. Specific for 5'-UACAU-3' sequences, cleaving after the first U. Yields cleavage products with 3' phosphate and 5' hydroxyl groups. Cannot digest substrate with a UUdUACAUAA cleavage site. Overexpression is toxic for cell growth (shown in E.coli), probably by inhibiting protein synthesis through the cleavage of single-stranded RNA. The toxicity is reversed by the antitoxin EndoAI. Toxin activity cannot be inhibited by MazE from E.coli. The EndoA-EndoAI complex does not seem to bind its own promoter. This is Endoribonuclease EndoA from Bacillus subtilis (strain 168).